The chain runs to 173 residues: Thiol-disulfide oxidoreductase ResA (173 aa).

Residues 10-29 (VIILLILCGAVGFTLYQGFF) traverse the membrane as a helical; Signal-anchor for type II membrane protein segment. One can recognise a Thioredoxin domain in the interval 35–173 (MQIGKEAPNF…LEGYLQKITP (139 aa)). A disulfide bridge connects residues Cys73 and Cys76.

Belongs to the thioredoxin family. ResA subfamily.

The protein resides in the cell membrane. It functions in the pathway protein modification; cytochrome c assembly. In terms of biological role, thiol-disulfide oxidoreductase which is required in disulfide reduction during c-type cytochrome synthesis. May accept reducing equivalents from CcdA, leading to breakage of disulfide bonds in apocytochrome c; following this reduction heme can be covalently attached. This is Thiol-disulfide oxidoreductase ResA from Bacillus cereus (strain ZK / E33L).